Here is a 465-residue protein sequence, read N- to C-terminus: UPF0422 protein CBU_0937 (465 aa).

Residues 1–23 (MTSKLVISALGLCVSGALSTTLA) form the signal peptide. The stretch at 28–60 (TTNQQITKRIDYLQAQINELRTQQKKERQKKKA) forms a coiled coil.

This sequence belongs to the UPF0422 family.

The protein is UPF0422 protein CBU_0937 of Coxiella burnetii (strain RSA 493 / Nine Mile phase I).